Reading from the N-terminus, the 115-residue chain is Toxin-like structure LSTX-D2 (115 aa).

Residues 1 to 22 (MKVLVLFSVLFLTLFSYSSTEA) form the signal peptide. A propeptide spanning residues 23 to 44 (IDEFDSDAEDDMLSLMANEQVR) is cleaved from the precursor. 4 cysteine pairs are disulfide-bonded: cysteine 48-cysteine 63, cysteine 55-cysteine 72, cysteine 62-cysteine 87, and cysteine 74-cysteine 85.

The protein belongs to the neurotoxin 19 (CSTX) family. 01 subfamily. Expressed by the venom gland.

The protein localises to the secreted. The sequence is that of Toxin-like structure LSTX-D2 from Lycosa singoriensis (Wolf spider).